We begin with the raw amino-acid sequence, 340 residues long: DNA-directed RNA polymerase subunit alpha (340 aa).

The interval 1 to 236 is alpha N-terminal domain (alpha-NTD); the sequence is MLSLSKNWNT…EQLQLFIAFE (236 aa). The interval 251–340 is alpha C-terminal domain (alpha-CTD); the sequence is FSPYLLKRVD…LSKRYEDSYN (90 aa).

The protein belongs to the RNA polymerase alpha chain family. Homodimer. The RNAP catalytic core consists of 2 alpha, 1 beta, 1 beta' and 1 omega subunit. When a sigma factor is associated with the core the holoenzyme is formed, which can initiate transcription.

It catalyses the reaction RNA(n) + a ribonucleoside 5'-triphosphate = RNA(n+1) + diphosphate. DNA-dependent RNA polymerase catalyzes the transcription of DNA into RNA using the four ribonucleoside triphosphates as substrates. This Rickettsia typhi (strain ATCC VR-144 / Wilmington) protein is DNA-directed RNA polymerase subunit alpha.